Reading from the N-terminus, the 405-residue chain is GTPase Obg (405 aa).

The region spanning 1–159 (MRFIDEAVVT…KVLKFELKVV (159 aa)) is the Obg domain. The OBG-type G domain maps to 160–333 (ADVGLIGLPN…IKYHLMNEIE (174 aa)). Residues 166–173 (GLPNAGKS), 191–195 (FTTLV), 213–216 (DIPG), 283–286 (NKID), and 314–316 (ATL) contribute to the GTP site. Residues Ser173 and Thr193 each coordinate Mg(2+). Basic and acidic residues predominate over residues 371–382 (YRAARKAAREGT). A disordered region spans residues 371-405 (YRAARKAAREGTDLSDDDFDDSDDDDDGVEVVYAP). Positions 383–399 (DLSDDDFDDSDDDDDGV) are enriched in acidic residues.

The protein belongs to the TRAFAC class OBG-HflX-like GTPase superfamily. OBG GTPase family. In terms of assembly, monomer. The cofactor is Mg(2+).

It localises to the cytoplasm. In terms of biological role, an essential GTPase which binds GTP, GDP and possibly (p)ppGpp with moderate affinity, with high nucleotide exchange rates and a fairly low GTP hydrolysis rate. Plays a role in control of the cell cycle, stress response, ribosome biogenesis and in those bacteria that undergo differentiation, in morphogenesis control. The polypeptide is GTPase Obg (Psychrobacter cryohalolentis (strain ATCC BAA-1226 / DSM 17306 / VKM B-2378 / K5)).